A 115-amino-acid polypeptide reads, in one-letter code: Putative septation protein SpoVG (115 aa).

Positions 88–115 (PGTIATSEVSSQLEESDSDKTLSEDLKA) are disordered. The span at 91–100 (IATSEVSSQL) shows a compositional bias: polar residues. Over residues 105-115 (SDKTLSEDLKA) the composition is skewed to basic and acidic residues.

This sequence belongs to the SpoVG family.

Could be involved in septation. This chain is Putative septation protein SpoVG, found in Macrococcus caseolyticus (strain JCSC5402) (Macrococcoides caseolyticum).